A 418-amino-acid chain; its full sequence is uncharacterized protein (418 aa).

Residues 1 to 24 form a disordered region; it reads MSGTAGFITVSPGPPTEAPGGFPR.

This sequence to A.pernix APE_1276 and S.solfataricus SSO2105.

This is an uncharacterized protein from Aeropyrum pernix (strain ATCC 700893 / DSM 11879 / JCM 9820 / NBRC 100138 / K1).